Reading from the N-terminus, the 463-residue chain is Secretogranin-3 (463 aa).

The signal sequence occupies residues 1–20 (MGPKYVFITAIIGVFWHVQG). Disordered regions lie at residues 87–111 (VKRSGSVRSSVGGHRGTLDDADSTK), 225–267 (DDDK…PEED), and 353–398 (EDKN…KGKA). 2 stretches are compositionally biased toward basic and acidic residues: residues 102 to 111 (GTLDDADSTK) and 229 to 262 (QEGKMETRNKNEDRESSETKNEDSFSSKERRNEL).

As to quaternary structure, interacts with CHGA. Interacts with secretogranin II/SCG2. Interacts (via C-terminus) with CPE.

It is found in the cytoplasmic vesicle. The protein resides in the secretory vesicle. Its subcellular location is the secretory vesicle membrane. The protein localises to the secreted. Functionally, member of the granin protein family that regulates the biogenesis of secretory granules. Acts as a sorting receptor for intragranular proteins including chromogranin A/CHGA. May also play a role in angiogenesis. Promotes endothelial proliferation, migration and tube formation through MEK/ERK signaling pathway. The chain is Secretogranin-3 (scg3) from Xenopus tropicalis (Western clawed frog).